A 185-amino-acid chain; its full sequence is Ribosome-recycling factor (185 aa).

The protein belongs to the RRF family.

The protein localises to the cytoplasm. Functionally, responsible for the release of ribosomes from messenger RNA at the termination of protein biosynthesis. May increase the efficiency of translation by recycling ribosomes from one round of translation to another. This Streptococcus pyogenes serotype M1 protein is Ribosome-recycling factor.